The primary structure comprises 420 residues: L-rhamnose isomerase (420 aa).

Residues His-264, Asp-296, and Asp-298 each contribute to the Mn(2+) site.

The protein belongs to the rhamnose isomerase family. Mn(2+) serves as cofactor.

Its subcellular location is the cytoplasm. The catalysed reaction is L-rhamnopyranose = L-rhamnulose. It participates in carbohydrate degradation; L-rhamnose degradation; glycerone phosphate from L-rhamnose: step 1/3. Its function is as follows. Catalyzes the interconversion of L-rhamnose and L-rhamnulose. The sequence is that of L-rhamnose isomerase from Listeria monocytogenes serotype 4b (strain CLIP80459).